A 70-amino-acid chain; its full sequence is DNA-directed RNA polymerase subunit epsilon (70 aa).

Belongs to the RNA polymerase subunit epsilon family. In terms of assembly, RNAP is composed of a core of 2 alpha, a beta and a beta' subunit. The core is associated with a delta subunit, and at least one of epsilon or omega. When a sigma factor is associated with the core the holoenzyme is formed, which can initiate transcription.

It carries out the reaction RNA(n) + a ribonucleoside 5'-triphosphate = RNA(n+1) + diphosphate. Its function is as follows. A non-essential component of RNA polymerase (RNAP). This Lacticaseibacillus casei (strain BL23) (Lactobacillus casei) protein is DNA-directed RNA polymerase subunit epsilon.